The following is a 274-amino-acid chain: 2-dehydro-3-deoxyphosphooctonate aldolase (274 aa).

This sequence belongs to the KdsA family.

It is found in the cytoplasm. The catalysed reaction is D-arabinose 5-phosphate + phosphoenolpyruvate + H2O = 3-deoxy-alpha-D-manno-2-octulosonate-8-phosphate + phosphate. It participates in carbohydrate biosynthesis; 3-deoxy-D-manno-octulosonate biosynthesis; 3-deoxy-D-manno-octulosonate from D-ribulose 5-phosphate: step 2/3. It functions in the pathway bacterial outer membrane biogenesis; lipopolysaccharide biosynthesis. The sequence is that of 2-dehydro-3-deoxyphosphooctonate aldolase from Rickettsia canadensis (strain McKiel).